The following is a 346-amino-acid chain: Prepilin peptidase EppA (346 aa).

A run of 10 helical transmembrane segments spans residues 1 to 21 (MFGF…LILT), 31 to 51 (IIPH…GYYF), 56 to 76 (AITS…GMGG), 77 to 97 (GDVK…IYFV), 101 to 121 (ISIL…TKIL), 128 to 148 (IIPS…ITEI), 149 to 169 (YSIG…IFIS), 182 to 202 (LGYI…AYFV), 206 to 226 (VLIS…VIYA), and 321 to 341 (PFVP…MGVI).

Belongs to the peptidase A24 family.

Its subcellular location is the cell membrane. Functionally, peptidase that processes the N-terminus of prepilins. Specifically cleaves proteins with a class III (type IV pilin-like) signal sequence, such as the major structural pilin EpdE and the minor pilins EpdA, EpdC and EpdD. Is not able to cleave the preflagellin subunit FlaB2. The chain is Prepilin peptidase EppA from Methanococcus maripaludis (strain DSM 14266 / JCM 13030 / NBRC 101832 / S2 / LL).